The following is a 647-amino-acid chain: Probable potassium transport system protein Kup (647 aa).

13 consecutive transmembrane segments (helical) span residues 32–52 (IALM…SPLY), 74–94 (VISM…VLFV), 124–144 (LLII…AIIT), 166–186 (FVLP…KTGT), 193–213 (FGPI…HQVI), 230–250 (FLIE…LVLT), 271–291 (WFFI…AMFL), 300–320 (PFFL…ATAA), 322–342 (VIAS…AILL), 361–381 (IYMP…VLAF), 390–410 (AYGI…AIVM), 418–438 (TILV…FLTA), and 443–463 (IMEG…FLMT).

It belongs to the HAK/KUP transporter (TC 2.A.72) family.

The protein resides in the cell inner membrane. It carries out the reaction K(+)(in) + H(+)(in) = K(+)(out) + H(+)(out). In terms of biological role, transport of potassium into the cell. Likely operates as a K(+):H(+) symporter. The protein is Probable potassium transport system protein Kup of Polynucleobacter asymbioticus (strain DSM 18221 / CIP 109841 / QLW-P1DMWA-1) (Polynucleobacter necessarius subsp. asymbioticus).